Consider the following 862-residue polypeptide: Semaphorin-4D (862 aa).

A signal peptide spans 1 to 21 (MRMCTPIRGLLMALAVMFGTA). Residues 22–500 (MAFAPIPRIT…SNSGVVQAPL (479 aa)) form the Sema domain. Topologically, residues 22-734 (MAFAPIPRIT…TMYLKSSDNR (713 aa)) are extracellular. N-linked (GlcNAc...) asparagine glycans are attached at residues Asn49 and Asn77. 2 cysteine pairs are disulfide-bonded: Cys97/Cys108 and Cys126/Cys135. Asn139 and Asn191 each carry an N-linked (GlcNAc...) asparagine glycan. Intrachain disulfides connect Cys257-Cys370 and Cys281-Cys326. Residues Asn329, Asn379, and Asn419 are each glycosylated (N-linked (GlcNAc...) asparagine). The region spanning 502-551 (FCGKHGTCEDCVLARDPYCAWSPPTATCVALHQTESPSRGLIQEMSGDAS) is the PSI domain. Disulfide bonds link Cys503/Cys520, Cys509/Cys553, Cys512/Cys529, and Cys576/Cys624. Residues 554–636 (PDKSKGSYRQ…EERVKNKTVF (83 aa)) enclose the Ig-like C2-type domain. N-linked (GlcNAc...) asparagine glycans are attached at residues Asn613 and Asn632. A helical membrane pass occupies residues 735-755 (LLMSLFLFFFVLFLCLFFYNC). The Cytoplasmic segment spans residues 756-862 (YKGYLPRQCL…KFADSDADGD (107 aa)). A disordered region spans residues 794–837 (VEPGSFSQQNGEHPKPALDTGYETEQDTITSKVPTDREDSQRID). The segment covering 827 to 837 (PTDREDSQRID) has biased composition (basic and acidic residues). Ser833 carries the phosphoserine modification.

This sequence belongs to the semaphorin family. Homodimer. Interacts with PLXNB2. Interacts with PLXNB1. Strongly expressed in skeletal muscle, peripheral blood lymphocytes, spleen, and thymus and also expressed at lower levels in testes, brain, kidney, small intestine, prostate, heart, placenta, lung and pancreas, but not in colon and liver.

The protein localises to the cell membrane. Cell surface receptor for PLXNB1 and PLXNB2 that plays an important role in cell-cell signaling. Regulates GABAergic synapse development. Promotes the development of inhibitory synapses in a PLXNB1-dependent manner. Modulates the complexity and arborization of developing neurites in hippocampal neurons by activating PLXNB1 and interaction with PLXNB1 mediates activation of RHOA. Promotes the migration of cerebellar granule cells. Plays a role in the immune system; induces B-cells to aggregate and improves their viability (in vitro). Induces endothelial cell migration through the activation of PTK2B/PYK2, SRC, and the phosphatidylinositol 3-kinase-AKT pathway. This chain is Semaphorin-4D (SEMA4D), found in Homo sapiens (Human).